Reading from the N-terminus, the 471-residue chain is Probable pyruvate, phosphate dikinase regulatory protein, chloroplastic (471 aa).

The N-terminal 49 residues, 1–49 (MSSSSSTSPRFGSMISAKLASPPPSLLLPPSPRLQGRRLTPPSCTPGTP), are a transit peptide targeting the chloroplast. Residues 1-133 (MSSSSSTSPR…PHPSSDEAAS (133 aa)) are disordered. Positions 21-32 (SPPPSLLLPPSP) are enriched in pro residues. The span at 71 to 88 (GSATTPRSPAQLGSSQLH) shows a compositional bias: polar residues. Positions 89–99 (RWSRARAHRSG) are enriched in basic residues. Positions 100 to 111 (RRLEWPTIRDRG) are enriched in basic and acidic residues. Residue 171-178 (HSVNAALG) coordinates ADP.

The protein belongs to the pyruvate, phosphate/water dikinase regulatory protein family. PDRP subfamily.

It localises to the plastid. The protein resides in the chloroplast. The catalysed reaction is N(tele)-phospho-L-histidyl/L-threonyl-[pyruvate, phosphate dikinase] + ADP = N(tele)-phospho-L-histidyl/O-phospho-L-threonyl-[pyruvate, phosphate dikinase] + AMP + H(+). It catalyses the reaction N(tele)-phospho-L-histidyl/O-phospho-L-threonyl-[pyruvate, phosphate dikinase] + phosphate + H(+) = N(tele)-phospho-L-histidyl/L-threonyl-[pyruvate, phosphate dikinase] + diphosphate. Regulated by light/dark exposure. Functionally, bifunctional serine/threonine kinase and phosphorylase involved in the dark/light-mediated regulation of PPDK by catalyzing its phosphorylation/dephosphorylation. Dark/light-induced changes in stromal concentrations of the competing ADP and Pi substrates govern the direction of the reaction. In the dark, phosphorylates the catalytic intermediate of PPDK (PPDK-HisP), inactivating it. Light exposure induces the phosphorolysis reaction that reactivates PPDK. The protein is Probable pyruvate, phosphate dikinase regulatory protein, chloroplastic (PDRP1) of Oryza sativa subsp. indica (Rice).